A 322-amino-acid polypeptide reads, in one-letter code: Sideroflexin-1 (322 aa).

Position 2 is an N-acetylserine (S2). The Mitochondrial matrix portion of the chain corresponds to 2–102; it reads SGELPPNINI…MSAQVPMNMT (101 aa). Residues 103–120 traverse the membrane as a helical segment; that stretch reads ITGCMMTFYRTTPAVLFW. Residues 121-146 lie on the Mitochondrial intermembrane side of the membrane; it reads QWINQSFNAVVNYTNRSGDAPLTVNE. Residues 147 to 167 traverse the membrane as a helical segment; it reads LGTAYVSATTGAVATALGLNA. Topologically, residues 168–174 are mitochondrial matrix; it reads LTKHVSP. The chain crosses the membrane as a helical span at residues 175 to 195; the sequence is LIGRFVPFAAVAAANCINIPL. The Mitochondrial intermembrane portion of the chain corresponds to 196–228; sequence MRQRELKVGIPVTDENGNRLGESANAAKQAITQ. Residues 229-249 form a helical membrane-spanning segment; sequence VVVSRILMAAPGMAIPPFIMN. Residues 250–266 are Mitochondrial matrix-facing; it reads TLEKKAFLKRFPWMSAP. A helical membrane pass occupies residues 267 to 287; that stretch reads IQVGLVGFCLVFATPLCCALF. Residues 288–322 lie on the Mitochondrial intermembrane side of the membrane; sequence PQKSSMSVTSLEAELQAKIQESHPELRRVYFNKGL.

Belongs to the sideroflexin family. As to expression, highly expressed in tissues with high one-carbon metabolism activity, such as blood, liver and kidney.

Its subcellular location is the mitochondrion inner membrane. The catalysed reaction is L-serine(in) = L-serine(out). It catalyses the reaction L-alanine(in) = L-alanine(out). It carries out the reaction L-cysteine(in) = L-cysteine(out). In terms of biological role, amino acid transporter importing serine, an essential substrate of the mitochondrial branch of the one-carbon pathway, into mitochondria. Mitochondrial serine is then converted to glycine and formate, which exits to the cytosol where it is used to generate the charged folates that serve as one-carbon donors. May also transport other amino acids including alanine and cysteine. This chain is Sideroflexin-1, found in Homo sapiens (Human).